The following is a 497-amino-acid chain: Guanosine-5'-triphosphate,3'-diphosphate pyrophosphatase (497 aa).

It belongs to the GppA/Ppx family. GppA subfamily.

The catalysed reaction is guanosine 3'-diphosphate 5'-triphosphate + H2O = guanosine 3',5'-bis(diphosphate) + phosphate + H(+). The protein operates within purine metabolism; ppGpp biosynthesis; ppGpp from GTP: step 2/2. Its function is as follows. Catalyzes the conversion of pppGpp to ppGpp. Guanosine pentaphosphate (pppGpp) is a cytoplasmic signaling molecule which together with ppGpp controls the 'stringent response', an adaptive process that allows bacteria to respond to amino acid starvation, resulting in the coordinated regulation of numerous cellular activities. The protein is Guanosine-5'-triphosphate,3'-diphosphate pyrophosphatase of Pseudoalteromonas translucida (strain TAC 125).